Here is a 205-residue protein sequence, read N- to C-terminus: Ribonuclease HII (205 aa).

The 205-residue stretch at 1–205 (MLVCGVDEAG…RPARLIEAGG (205 aa)) folds into the RNase H type-2 domain. Asp7, Glu8, and Asp105 together coordinate a divalent metal cation.

This sequence belongs to the RNase HII family. The cofactor is Mn(2+). Mg(2+) is required as a cofactor.

It is found in the cytoplasm. It catalyses the reaction Endonucleolytic cleavage to 5'-phosphomonoester.. Endonuclease that specifically degrades the RNA of RNA-DNA hybrids. This chain is Ribonuclease HII, found in Cenarchaeum symbiosum (strain A).